Reading from the N-terminus, the 313-residue chain is Ribosomal RNA small subunit methyltransferase H (313 aa).

S-adenosyl-L-methionine-binding positions include 35 to 37 (GGH), D55, F79, D101, and Q108.

It belongs to the methyltransferase superfamily. RsmH family.

The protein resides in the cytoplasm. The enzyme catalyses cytidine(1402) in 16S rRNA + S-adenosyl-L-methionine = N(4)-methylcytidine(1402) in 16S rRNA + S-adenosyl-L-homocysteine + H(+). In terms of biological role, specifically methylates the N4 position of cytidine in position 1402 (C1402) of 16S rRNA. In Salmonella agona (strain SL483), this protein is Ribosomal RNA small subunit methyltransferase H.